Here is a 311-residue protein sequence, read N- to C-terminus: Cytochrome c biogenesis protein CcsA (311 aa).

Helical transmembrane passes span 11–31 (VLLLGLMAFGALLLALPLAFW), 44–64 (VVQLLVVAANLLLTAQLLWRW), 68–88 (GHFPISNLYESLCFLAWGCTF), 101–121 (LVPAATTPMALVCVAFASFAL), 146–166 (VIMMSYAALLVGSLLSAAVLF), 217–237 (TITVGFLLLTVGIISGAVWAN), 251–268 (TWALICWLVYAAYLHTRL), and 280–300 (VAVSGLFVISVCYIGVNLLGI).

This sequence belongs to the CcmF/CycK/Ccl1/NrfE/CcsA family. May interact with ccs1.

It localises to the cellular thylakoid membrane. Its function is as follows. Required during biogenesis of c-type cytochromes (cytochrome c6 and cytochrome f) at the step of heme attachment. This chain is Cytochrome c biogenesis protein CcsA, found in Synechococcus sp. (strain RCC307).